The chain runs to 247 residues: tRNA pseudouridine synthase A (247 aa).

Aspartate 58 functions as the Nucleophile in the catalytic mechanism. Tyrosine 116 serves as a coordination point for substrate.

The protein belongs to the tRNA pseudouridine synthase TruA family. In terms of assembly, homodimer.

The enzyme catalyses uridine(38/39/40) in tRNA = pseudouridine(38/39/40) in tRNA. Functionally, formation of pseudouridine at positions 38, 39 and 40 in the anticodon stem and loop of transfer RNAs. The chain is tRNA pseudouridine synthase A from Hydrogenobaculum sp. (strain Y04AAS1).